Consider the following 326-residue polypeptide: MGSLGKVNNEIPTKSSGGSKVLVIGGTGYLGKRLVKASLDSGHDTYVMHRPEIGVDIEKVQLLLSFKMQGAHLVSASFDDQRSLVDAVKLVDVVICAISGVHIRSHQILLQLKLVEAIKEAGNVKRFVPSEFGTDPARMENAMEPGRITFDDKMVVRRAIEEAGIPFTYVSANCFAGYFLGGLCQPGYILPSRDHVTLLGDGDKKGVYVDEDDTAAYTLRAIDDPRTLNKTIYVKPPKNVLSQREVVGIWEKYIGKELQKTILSEQDFLATMREQNYAEQVGLTHYYHVCYEGCLSNFEVDDEQEASKLYPDVHYTTVEEYLKRYV.

Residues 25 to 31, Arg50, and Lys59 each bind NADP(+); that span reads GGTGYLG. Catalysis depends on Lys153, which acts as the Proton acceptor. Residue Arg157 coordinates NADP(+). His285 lines the substrate pocket.

It belongs to the NmrA-type oxidoreductase family. Isoflavone reductase subfamily. As to quaternary structure, dimer.

It catalyses the reaction (+)-lariciresinol + NADP(+) = (+)-pinoresinol + NADPH + H(+). The enzyme catalyses (-)-secoisolariciresinol + NADP(+) = (+)-lariciresinol + NADPH + H(+). Reductase involved in lignan biosynthesis. Catalyzes the enantioselective conversion of (+)-pinoresinol into (+)-lariciresinol and of (+)-lariciresinol into (-)-secoisolariciresinol. Abstracts the 4R-hydride from the NADPH cofactor during catalysis. The chain is Bifunctional pinoresinol-lariciresinol reductase (PLR1) from Linum album (Flax).